A 119-amino-acid polypeptide reads, in one-letter code: MNLEAYFPVLLFIIIGVGLGLALMTIGRILGPNNPDPDKLSPYECGFEAFEDARMKFDVRYYLIAILFILFDLETAFLFPWGVALRDIGWPGFFAMGVFLLEFLVGFVYIWKKGALDWE.

A run of 3 helical transmembrane segments spans residues 7–27, 63–83, and 88–108; these read FPVL…MTIG, LIAI…PWGV, and IGWP…VGFV.

It belongs to the complex I subunit 3 family. As to quaternary structure, NDH-1 is composed of 14 different subunits. Subunits NuoA, H, J, K, L, M, N constitute the membrane sector of the complex.

Its subcellular location is the cell inner membrane. It carries out the reaction a quinone + NADH + 5 H(+)(in) = a quinol + NAD(+) + 4 H(+)(out). NDH-1 shuttles electrons from NADH, via FMN and iron-sulfur (Fe-S) centers, to quinones in the respiratory chain. The immediate electron acceptor for the enzyme in this species is believed to be ubiquinone. Couples the redox reaction to proton translocation (for every two electrons transferred, four hydrogen ions are translocated across the cytoplasmic membrane), and thus conserves the redox energy in a proton gradient. The sequence is that of NADH-quinone oxidoreductase subunit A from Ralstonia nicotianae (strain ATCC BAA-1114 / GMI1000) (Ralstonia solanacearum).